Here is a 216-residue protein sequence, read N- to C-terminus: Probable GTP-binding protein EngB (216 aa).

An EngB-type G domain is found at 27-201 (GGVEIAFAGR…AQTLTGWYLA (175 aa)). Residues 35–42 (GRSNAGKS), 62–66 (GRTQL), 80–83 (DLPG), 147–150 (TKAD), and 180–182 (FSS) each bind GTP. Mg(2+) contacts are provided by Ser42 and Thr64.

It belongs to the TRAFAC class TrmE-Era-EngA-EngB-Septin-like GTPase superfamily. EngB GTPase family. It depends on Mg(2+) as a cofactor.

In terms of biological role, necessary for normal cell division and for the maintenance of normal septation. The sequence is that of Probable GTP-binding protein EngB from Aeromonas hydrophila subsp. hydrophila (strain ATCC 7966 / DSM 30187 / BCRC 13018 / CCUG 14551 / JCM 1027 / KCTC 2358 / NCIMB 9240 / NCTC 8049).